A 470-amino-acid chain; its full sequence is Cyclic AMP-responsive element-binding protein 3-like protein 3 (470 aa).

Residues M1–C319 lie on the Cytoplasmic side of the membrane. The disordered stretch occupies residues S59–E145. Residues V239–L302 form the bZIP domain. A basic motif region spans residues K241 to R270. The leucine-zipper stretch occupies residues L281–L302. K290 participates in a covalent cross-link: Glycyl lysine isopeptide (Lys-Gly) (interchain with G-Cter in ubiquitin). A helical; Signal-anchor for type II membrane protein membrane pass occupies residues I320–A340. The Lumenal portion of the chain corresponds to N341–L470. Residues N410 and N417 are each glycosylated (N-linked (GlcNAc...) asparagine).

This sequence belongs to the bZIP family. ATF subfamily. In terms of assembly, binds DNA as a dimer. May form homodimers. Interacts with ATF6. Interacts with SYNV1/HRD1; this interaction leads to CREB3L3 ubiquitination and proteasomal degradation. Post-translationally, controlled by regulated intramembrane proteolysis (RIP). Following ER stress a fragment containing the cytoplasmic transcription factor domain is released by proteolysis. The cleavage seems to be performed sequentially by site-1 and site-2 proteases (PS1 and PS2). N-glycosylation is required for optimal proteolytic activation. In terms of processing, ubiquitinated at Lys-290 by SYNV1/HRD1 via 'Lys-27'-linked ubiquitin.

It localises to the endoplasmic reticulum membrane. Its subcellular location is the nucleus. In terms of biological role, transcription factor that may act during endoplasmic reticulum stress by activating unfolded protein response target genes. Activated in response to cAMP stimulation. Binds the cAMP response element (CRE). Activates transcription through box-B element and CRE. Seems to function synergistically with ATF6. In acute inflammatory response, may activate expression of acute phase response (APR) genes. May be involved in growth suppression. Regulates FGF21 transcription. Plays a crucial role in the regulation of triglyceride metabolism and is required for the maintenance of normal plasma triglyceride concentrations. The protein is Cyclic AMP-responsive element-binding protein 3-like protein 3 (Creb3l3) of Rattus norvegicus (Rat).